The primary structure comprises 295 residues: Protoheme IX farnesyltransferase (295 aa).

9 helical membrane-spanning segments follow: residues 27–47 (LVVFTAIAGMVAAPGSIHPFL), 48–68 (ALISLMCIALGSGSAGAINMW), 94–114 (SALEFGITIGILSVFIMAIAV), 117–137 (ISAALLAVSILFYVFVYTIWL), 144–164 (NIVIGGAAGAFPPMIGWAVVT), 171–191 (SFILFLIIFMWTPPHFWALSL), 216–236 (KHILIYSILLVLTSLLPALFL), 241–261 (FYLSMAIIEGCVFIWFAISVI), and 272–292 (MFSYSISYLFSLFASIIFCSI).

This sequence belongs to the UbiA prenyltransferase family. Protoheme IX farnesyltransferase subfamily.

It localises to the cell membrane. The catalysed reaction is heme b + (2E,6E)-farnesyl diphosphate + H2O = Fe(II)-heme o + diphosphate. It functions in the pathway porphyrin-containing compound metabolism; heme O biosynthesis; heme O from protoheme: step 1/1. Its function is as follows. Converts heme B (protoheme IX) to heme O by substitution of the vinyl group on carbon 2 of heme B porphyrin ring with a hydroxyethyl farnesyl side group. This is Protoheme IX farnesyltransferase from Wolbachia pipientis subsp. Culex pipiens (strain wPip).